We begin with the raw amino-acid sequence, 179 residues long: Large ribosomal subunit protein uL5 (179 aa).

It belongs to the universal ribosomal protein uL5 family. Part of the 50S ribosomal subunit; part of the 5S rRNA/L5/L18/L25 subcomplex. Contacts the 5S rRNA and the P site tRNA. Forms a bridge to the 30S subunit in the 70S ribosome.

In terms of biological role, this is one of the proteins that bind and probably mediate the attachment of the 5S RNA into the large ribosomal subunit, where it forms part of the central protuberance. In the 70S ribosome it contacts protein S13 of the 30S subunit (bridge B1b), connecting the 2 subunits; this bridge is implicated in subunit movement. Contacts the P site tRNA; the 5S rRNA and some of its associated proteins might help stabilize positioning of ribosome-bound tRNAs. The chain is Large ribosomal subunit protein uL5 from Staphylococcus haemolyticus (strain JCSC1435).